Here is a 317-residue protein sequence, read N- to C-terminus: USG-1 protein homolog (317 aa).

It belongs to the aspartate-semialdehyde dehydrogenase family.

The chain is USG-1 protein homolog (usg) from Haemophilus influenzae (strain ATCC 51907 / DSM 11121 / KW20 / Rd).